The following is a 346-amino-acid chain: Cytochrome c551 peroxidase (346 aa).

Positions 1 to 23 (MQSSQLLPLGSLLLSFATPLAQA) are cleaved as a signal peptide. Cys74, Cys77, His78, Cys220, Cys223, His224, His284, and Met298 together coordinate heme c.

It depends on heme c as a cofactor. Post-translationally, binds 2 heme groups per subunit. Sequencing of the whole protein indicates about 20% starts on Val-247.

The protein resides in the periplasm. The catalysed reaction is 2 Fe(II)-[cytochrome c] + H2O2 + 2 H(+) = 2 Fe(III)-[cytochrome c] + 2 H2O. Catalyzes the peroxidative oxidation of azurin and cytochrome c551. Likely to provide protection against toxic peroxides. This Pseudomonas aeruginosa (strain ATCC 15692 / DSM 22644 / CIP 104116 / JCM 14847 / LMG 12228 / 1C / PRS 101 / PAO1) protein is Cytochrome c551 peroxidase (ccpA).